The following is a 190-amino-acid chain: Spermatogenesis-associated protein 12 (190 aa).

In terms of tissue distribution, expressed in testis.

This chain is Spermatogenesis-associated protein 12 (SPATA12), found in Homo sapiens (Human).